Reading from the N-terminus, the 342-residue chain is L-threonine 3-dehydrogenase (342 aa).

Cysteine 39 serves as a coordination point for Zn(2+). Catalysis depends on charge relay system residues threonine 41 and histidine 44. Residues histidine 64, glutamate 65, cysteine 94, cysteine 97, cysteine 100, and cysteine 108 each contribute to the Zn(2+) site. NAD(+) contacts are provided by residues isoleucine 176, aspartate 196, arginine 201, 263 to 265 (LGI), and 287 to 288 (IY).

It belongs to the zinc-containing alcohol dehydrogenase family. In terms of assembly, homotetramer. Zn(2+) is required as a cofactor.

The protein resides in the cytoplasm. The catalysed reaction is L-threonine + NAD(+) = (2S)-2-amino-3-oxobutanoate + NADH + H(+). Its pathway is amino-acid degradation; L-threonine degradation via oxydo-reductase pathway; glycine from L-threonine: step 1/2. Functionally, catalyzes the NAD(+)-dependent oxidation of L-threonine to 2-amino-3-ketobutyrate. This Protochlamydia amoebophila (strain UWE25) protein is L-threonine 3-dehydrogenase.